A 1113-amino-acid chain; its full sequence is StAR-related lipid transfer protein 13 (1113 aa).

Residue Met1 is modified to N-acetylmethionine. Residues 55 to 122 form the SAM domain; sequence QQEIEAKEAC…LNKCASMRLD (68 aa). Disordered stretches follow at residues 164–218, 230–256, and 308–343; these read PVAD…HSAD, SSLPQSTREGLNQSFHPKNEKPTRTRA, and NGDLQTSPPAACRKGLPCSSKSSGESSPLENSSTVS. Polar residues predominate over residues 179-188; the sequence is NTASSESVLT. Residues 197 to 214 show a composition bias toward low complexity; sequence SIHSESSGGSDSRSQSGH. A compositionally biased stretch (polar residues) spans 230 to 245; that stretch reads SSLPQSTREGLNQSFH. The span at 322 to 340 shows a compositional bias: low complexity; sequence GLPCSSKSSGESSPLENSS. The residue at position 411 (Ser411) is a Phosphoserine. Polar residues-rich tracts occupy residues 421–435 and 529–549; these read SNGVNWRTGSISLGR and PNQVTLDFEGNSVSEGRTTPS. Disordered regions lie at residues 421-443 and 514-578; these read SNGVNWRTGSISLGRQQGPGMRE and HSTL…GASL. Residues 663–868 form the Rho-GAP domain; that stretch reads VPLIVHVQRT…HMITECNRLF (206 aa). The region spanning 899 to 1109 is the START domain; it reads LAESGATFHT…SFQPLVAEGP (211 aa).

In terms of assembly, homodimer. Interacts with TAX1BP1.

The protein localises to the cytoplasm. It localises to the membrane. The protein resides in the mitochondrion membrane. It is found in the lipid droplet. Its function is as follows. May function as a GTPase-activating protein. The sequence is that of StAR-related lipid transfer protein 13 (Stard13) from Mus musculus (Mouse).